A 608-amino-acid chain; its full sequence is Chaperone protein HtpG (608 aa).

Residues 1-332 (MQFQTEVNQL…VEDLPLNVSR (332 aa)) are a; substrate-binding. Residues 333–536 (EILQENQILK…KNKPDFAMQQ (204 aa)) form a b region. The interval 537–608 (LLKQMGQEQN…LTKIINKAFS (72 aa)) is c.

It belongs to the heat shock protein 90 family. In terms of assembly, homodimer.

Its subcellular location is the cytoplasm. Molecular chaperone. Has ATPase activity. In Campylobacter jejuni subsp. jejuni serotype O:6 (strain 81116 / NCTC 11828), this protein is Chaperone protein HtpG.